The sequence spans 59 residues: Conotoxin reg3.15 (59 aa).

A signal peptide spans 1-15 (RVLLTICLLLFPLTA). The propeptide occupies 16–44 (IPLGGDQPAERMRNVRSAVQDPRFDSVGW). Disulfide bonds link C45–C59, C46–C55, and C51–C58.

The protein belongs to the conotoxin M superfamily. In terms of tissue distribution, expressed by the venom duct.

Its subcellular location is the secreted. The sequence is that of Conotoxin reg3.15 from Conus regius (Crown cone).